The sequence spans 88 residues: U13-theraphotoxin-Cg1a (88 aa).

The first 21 residues, M1–A21, serve as a signal peptide directing secretion. Positions A22–R52 are excised as a propeptide. Disulfide bonds link C54/C68, C61/C73, and C67/C80.

The protein belongs to the neurotoxin 10 (Hwtx-1) family. 41 (Jztx-36) subfamily. Expressed by the venom gland.

Its subcellular location is the secreted. Functionally, probable ion channel inhibitor. In Chilobrachys guangxiensis (Chinese earth tiger tarantula), this protein is U13-theraphotoxin-Cg1a.